We begin with the raw amino-acid sequence, 138 residues long: Large ribosomal subunit protein bL19 (138 aa).

This sequence belongs to the bacterial ribosomal protein bL19 family.

Its function is as follows. This protein is located at the 30S-50S ribosomal subunit interface and may play a role in the structure and function of the aminoacyl-tRNA binding site. In Rickettsia akari (strain Hartford), this protein is Large ribosomal subunit protein bL19.